Reading from the N-terminus, the 438-residue chain is MESQQLHQNPHCPHGSAYASVTSKEVPSNQDPLAVSASNLPEFDRDSTKVNSQEETTPGTSAVPENHHHVSPQPASVPPPQNGQYQQHGMMTPNKAMASNWAHYQQPSMMTCSHYQTSPAYYQPDPHYPLPQYIPPLSTSSPDPIDSQDQHSEVPQAKTKVRNNVLPPHPHTSEENFSTWVKFYIRFLKNSNLGDIIPNDQGEIKRQMTYEEHAYIYNTFQAFAPFHLLPTWVKQILEINYSDILTVLCKSVSKMQTNNQELKDWIALANLEYNGSTSADTFEITVSTIIQRLKENNINVSDRLACQLILKGLSGDFKYLRNQYRTKTNMKLSQLFAEIQLIYDENKIMNLNKPSQYKQHSEYKNVSRTSPNTTNTKVTTRNYHRTNSSKPRAAKAHNIATSSKFSRVNNDHINESTVSSQYLSDDNELSLRPATERI.

Disordered regions lie at residues 1–88 (MESQ…YQQH), 365–397 (NVSRTSPNTTNTKVTTRNYHRTNSSKPRAAKAH), and 419–438 (SSQYLSDDNELSLRPATERI). Polar residues-rich tracts occupy residues 19–39 (ASVTSKEVPSNQDPLAVSASN) and 49–60 (KVNSQEETTPGT). The tract at residues 295–397 (ENNINVSDRL…SSKPRAAKAH (103 aa)) is RNA-binding. The segment covering 369-381 (TSPNTTNTKVTTR) has biased composition (low complexity).

As to quaternary structure, homotrimer.

It is found in the cytoplasm. In terms of biological role, capsid protein (CA) is the structural component of the virus-like particle (VLP), forming the shell that encapsulates the retrotransposons dimeric RNA genome. The particles are assembled from trimer-clustered units and there are holes in the capsid shells that allow for the diffusion of macromolecules. CA also has nucleocapsid-like chaperone activity, promoting primer tRNA(i)-Met annealing to the multipartite primer-binding site (PBS), dimerization of Ty2 RNA and initiation of reverse transcription. The sequence is that of Transposon Ty2-OR2 Gag polyprotein (TY2A-OR2) from Saccharomyces cerevisiae (strain ATCC 204508 / S288c) (Baker's yeast).